Consider the following 21-residue polypeptide: Hemocyanin subunit 6 (21 aa).

This sequence belongs to the tyrosinase family. Hemocyanin subfamily. Hemolymph.

The protein resides in the secreted. The protein localises to the extracellular space. In terms of biological role, hemocyanins are copper-containing oxygen carriers occurring freely dissolved in the hemolymph of many mollusks and arthropods. This Maja squinado (Mediterranean spider crab) protein is Hemocyanin subunit 6.